A 490-amino-acid chain; its full sequence is Betaine aldehyde dehydrogenase (490 aa).

Positions 26, 27, and 93 each coordinate K(+). Residue 150–152 (GAW) coordinates NAD(+). The active-site Charge relay system is the lysine 162. 176–179 (KPSE) serves as a coordination point for NAD(+). Valine 180 is a K(+) binding site. 230–233 (GVAS) serves as a coordination point for NAD(+). Leucine 246 provides a ligand contact to K(+). Glutamate 252 functions as the Proton acceptor in the catalytic mechanism. NAD(+) contacts are provided by glycine 254, cysteine 286, and glutamate 387. Cysteine 286 (nucleophile) is an active-site residue. Cysteine 286 bears the Cysteine sulfenic acid (-SOH) mark. Residues lysine 457 and glycine 460 each contribute to the K(+) site. Catalysis depends on glutamate 464, which acts as the Charge relay system.

This sequence belongs to the aldehyde dehydrogenase family. As to quaternary structure, dimer of dimers. K(+) serves as cofactor.

It carries out the reaction betaine aldehyde + NAD(+) + H2O = glycine betaine + NADH + 2 H(+). It participates in amine and polyamine biosynthesis; betaine biosynthesis via choline pathway; betaine from betaine aldehyde: step 1/1. Functionally, involved in the biosynthesis of the osmoprotectant glycine betaine. Catalyzes the irreversible oxidation of betaine aldehyde to the corresponding acid. In Escherichia coli O139:H28 (strain E24377A / ETEC), this protein is Betaine aldehyde dehydrogenase.